Consider the following 438-residue polypeptide: Phospholipase D Y (438 aa).

The N-terminal stretch at 1–19 (MIINRLFIIIVLFFVNVNS) is a signal peptide. Asparagine 50 carries N-linked (GlcNAc...) asparagine glycosylation. The PLD phosphodiesterase 1 domain occupies 145–172 (GSGVLHTKLIIIDESSAYVGSANADWSS). Catalysis depends on residues histidine 150, lysine 152, and aspartate 157. N-linked (GlcNAc...) asparagine glycosylation is found at asparagine 223, asparagine 336, and asparagine 394. Residues 373–399 (YTRVNHAKFMVTEKQSYVGTSNWSQDY) enclose the PLD phosphodiesterase 2 domain.

This sequence belongs to the phospholipase D family.

It catalyses the reaction a 1,2-diacyl-sn-glycero-3-phosphocholine + H2O = a 1,2-diacyl-sn-glycero-3-phosphate + choline + H(+). Inhibited by butan-1-ol. Its function is as follows. Hydrolyzes membrane phospholipids, such as PtdCho (phosphatidylcholine), producing the free headgroup and PtdOH (phosphatidic acid; signaling molecule on its own). The protein is Phospholipase D Y (pldY) of Dictyostelium discoideum (Social amoeba).